The chain runs to 320 residues: Cytochrome f (320 aa).

Positions 1–35 (MQTRNTFSWIREEITRSISVSLIIYIITWASISSA) are cleaved as a signal peptide. The heme site is built by tyrosine 36, cysteine 56, cysteine 59, and histidine 60. A helical transmembrane segment spans residues 286 to 305 (VQGLLFFLGSVVLAQIFLVL).

It belongs to the cytochrome f family. As to quaternary structure, the 4 large subunits of the cytochrome b6-f complex are cytochrome b6, subunit IV (17 kDa polypeptide, petD), cytochrome f and the Rieske protein, while the 4 small subunits are PetG, PetL, PetM and PetN. The complex functions as a dimer. Heme is required as a cofactor.

The protein localises to the plastid. It localises to the chloroplast thylakoid membrane. Functionally, component of the cytochrome b6-f complex, which mediates electron transfer between photosystem II (PSII) and photosystem I (PSI), cyclic electron flow around PSI, and state transitions. The protein is Cytochrome f (petA) of Arabidopsis thaliana (Mouse-ear cress).